The chain runs to 324 residues: MIELLSAAGQAIGNGPWQTALNTLLNEKSRQLTDVDGNARRLTALMNQLPDLLPSHRNLASGRIEIGTPEDLTETQHQALYDTLMAFRPWRKGPFNIFGIPVDTEWRSDLKWARIAPHLAPLQGRRILDVGSSCGYYLMRMAEANPQLALGLEPYPPLFCQYVLLQRWLKLPQVHCLPLKLEELPPMDGYFDTIFHMGVLYHQRSPHEALKQLASLLRPGGELVLETLVLDGDQDLALCPRDRYAKMRNVFFLPTVPCLEAWLNKAGFEDIRCVDRSWTTIEEQHPTPWINTESLPDFLDPSDPTRTIEGYQAPLRAAVIARRR.

Carboxy-S-adenosyl-L-methionine is bound by residues K92, W106, K111, G131, 181-182 (LE), M197, Y201, and R316.

Belongs to the class I-like SAM-binding methyltransferase superfamily. CmoB family. Homotetramer.

The catalysed reaction is carboxy-S-adenosyl-L-methionine + 5-hydroxyuridine(34) in tRNA = 5-carboxymethoxyuridine(34) in tRNA + S-adenosyl-L-homocysteine + H(+). In terms of biological role, catalyzes carboxymethyl transfer from carboxy-S-adenosyl-L-methionine (Cx-SAM) to 5-hydroxyuridine (ho5U) to form 5-carboxymethoxyuridine (cmo5U) at position 34 in tRNAs. This is tRNA U34 carboxymethyltransferase from Syntrophotalea carbinolica (strain DSM 2380 / NBRC 103641 / GraBd1) (Pelobacter carbinolicus).